Here is a 211-residue protein sequence, read N- to C-terminus: MRVRKRKGAQEYLENNPHYVILEPEAAKGRWCEVFGNDHPIHIEVGSGKGAFITGMALKNPEINYIGIDIQLSVLSYALDKVLASQAPNIRLLRVDGSSLTNYFDAGEIDMMYLNFSDPWPKSRHEKRRLTYKSFLDTYKQILPENGEIHFKTDNRGLFEYSLASFSQYGMTLKQVWLDLHASDYPDNVMTEYEARFAKKGQVIYRLEATF.

Positions 44, 69, 96, and 118 each coordinate S-adenosyl-L-methionine. The active site involves D118. K122 lines the substrate pocket. Residues 124–129 (RHEKRR) form an interaction with RNA region. Substrate is bound by residues D154 and 191 to 194 (TEYE).

This sequence belongs to the class I-like SAM-binding methyltransferase superfamily. TrmB family.

The catalysed reaction is guanosine(46) in tRNA + S-adenosyl-L-methionine = N(7)-methylguanosine(46) in tRNA + S-adenosyl-L-homocysteine. The protein operates within tRNA modification; N(7)-methylguanine-tRNA biosynthesis. Catalyzes the formation of N(7)-methylguanine at position 46 (m7G46) in tRNA. The protein is tRNA (guanine-N(7)-)-methyltransferase of Streptococcus equi subsp. zooepidemicus (strain MGCS10565).